Reading from the N-terminus, the 590-residue chain is Acetolactate synthase large subunit (590 aa).

Position 61 (Glu61) interacts with thiamine diphosphate. FAD contacts are provided by residues Arg163, His271–Arg292, and Asp314–Asp333. Residues Gln405–Trp484 are thiamine pyrophosphate binding. Mg(2+)-binding residues include Asp455 and Asn482.

This sequence belongs to the TPP enzyme family. Dimer of large and small chains. Mg(2+) serves as cofactor. The cofactor is thiamine diphosphate.

The protein resides in the plastid. It localises to the chloroplast. The enzyme catalyses 2 pyruvate + H(+) = (2S)-2-acetolactate + CO2. It participates in amino-acid biosynthesis; L-isoleucine biosynthesis; L-isoleucine from 2-oxobutanoate: step 1/4. Its pathway is amino-acid biosynthesis; L-valine biosynthesis; L-valine from pyruvate: step 1/4. In Porphyra purpurea (Red seaweed), this protein is Acetolactate synthase large subunit (ilvB).